A 76-amino-acid polypeptide reads, in one-letter code: Toxin Acra III-2 (76 aa).

An LCN-type CS-alpha/beta domain is found at 3 to 67 (VPGNYPLNTY…IWDAVKNHCT (65 aa)). 3 cysteine pairs are disulfide-bonded: Cys18/Cys41, Cys27/Cys46, and Cys31/Cys48.

It belongs to the long (3 C-C) scorpion toxin superfamily. Sodium channel inhibitor family. Beta subfamily. In terms of tissue distribution, expressed by the venom gland.

It is found in the secreted. Functionally, binds to sodium channels (Nav) and affects the channel activation process. The chain is Toxin Acra III-2 from Androctonus crassicauda (Arabian fat-tailed scorpion).